Consider the following 360-residue polypeptide: Peptide chain release factor 1 (360 aa).

Q237 is modified (N5-methylglutamine).

Belongs to the prokaryotic/mitochondrial release factor family. Methylated by PrmC. Methylation increases the termination efficiency of RF1.

The protein localises to the cytoplasm. Its function is as follows. Peptide chain release factor 1 directs the termination of translation in response to the peptide chain termination codons UAG and UAA. The protein is Peptide chain release factor 1 of Teredinibacter turnerae (strain ATCC 39867 / T7901).